A 380-amino-acid chain; its full sequence is Anhydro-N-acetylmuramic acid kinase (380 aa).

Gly-17–Asp-24 contributes to the ATP binding site.

Belongs to the anhydro-N-acetylmuramic acid kinase family.

It carries out the reaction 1,6-anhydro-N-acetyl-beta-muramate + ATP + H2O = N-acetyl-D-muramate 6-phosphate + ADP + H(+). Its pathway is amino-sugar metabolism; 1,6-anhydro-N-acetylmuramate degradation. It functions in the pathway cell wall biogenesis; peptidoglycan recycling. Its function is as follows. Catalyzes the specific phosphorylation of 1,6-anhydro-N-acetylmuramic acid (anhMurNAc) with the simultaneous cleavage of the 1,6-anhydro ring, generating MurNAc-6-P. Is required for the utilization of anhMurNAc either imported from the medium or derived from its own cell wall murein, and thus plays a role in cell wall recycling. This chain is Anhydro-N-acetylmuramic acid kinase, found in Cupriavidus metallidurans (strain ATCC 43123 / DSM 2839 / NBRC 102507 / CH34) (Ralstonia metallidurans).